The primary structure comprises 733 residues: Tyrosine-protein kinase ptk (733 aa).

A run of 2 helical transmembrane segments spans residues 19 to 39 and 438 to 458; these read LFFS…LSLI and LQIL…LALL. ATP is bound at residue 542 to 550; sequence GPAPEVGKS.

It belongs to the etk/wzc family. Mg(2+) is required as a cofactor. Requires Mn(2+) as cofactor. In terms of processing, autophosphorylated on several Tyr residues. Dephosphorylated by ptp.

The protein resides in the cell inner membrane. The catalysed reaction is L-tyrosyl-[protein] + ATP = O-phospho-L-tyrosyl-[protein] + ADP + H(+). The protein operates within glycan metabolism; exopolysaccharide biosynthesis. In terms of biological role, may be involved in the production and the transport of exopolysaccharides. This chain is Tyrosine-protein kinase ptk (ptk), found in Acinetobacter johnsonii.